A 463-amino-acid polypeptide reads, in one-letter code: tRNA (guanine(10)-N(2))-methyltransferase TRMT11 (463 aa).

A2 carries the N-acetylalanine modification.

Belongs to the class I-like SAM-binding methyltransferase superfamily. TRM11 methyltransferase family. Part of the heterodimeric TRMT11-TRM112 methyltransferase complex; this complex forms an active tRNA methyltransferase, where TRMT112 acts as an activator of the catalytic subunit TRMT11.

The protein localises to the cytoplasm. It carries out the reaction guanosine(10) in tRNA + S-adenosyl-L-methionine = N(2)-methylguanosine(10) in tRNA + S-adenosyl-L-homocysteine + H(+). In terms of biological role, catalytic subunit of the TRMT11-TRM112 methyltransferase complex, that specifically mediates the S-adenosyl-L-methionine-dependent N(2)-methylation of guanosine nucleotide at position 10 (m2G10) in tRNAs. This is one of the major tRNA (guanine-N(2))-methyltransferases. This Pongo abelii (Sumatran orangutan) protein is tRNA (guanine(10)-N(2))-methyltransferase TRMT11.